Consider the following 427-residue polypeptide: Histidine--tRNA ligase (427 aa).

Belongs to the class-II aminoacyl-tRNA synthetase family. As to quaternary structure, homodimer.

Its subcellular location is the cytoplasm. The catalysed reaction is tRNA(His) + L-histidine + ATP = L-histidyl-tRNA(His) + AMP + diphosphate + H(+). The polypeptide is Histidine--tRNA ligase (Proteus mirabilis (strain HI4320)).